Consider the following 399-residue polypeptide: Argininosuccinate synthase (399 aa).

8–16 lines the ATP pocket; it reads AYSGGLDTS. L-citrulline is bound at residue Y87. G117 contributes to the ATP binding site. Positions 119, 123, and 124 each coordinate L-aspartate. N123 contributes to the L-citrulline binding site. L-citrulline is bound by residues R127, S175, E260, and Y272.

Belongs to the argininosuccinate synthase family. Type 1 subfamily. In terms of assembly, homotetramer.

Its subcellular location is the cytoplasm. The catalysed reaction is L-citrulline + L-aspartate + ATP = 2-(N(omega)-L-arginino)succinate + AMP + diphosphate + H(+). It participates in amino-acid biosynthesis; L-arginine biosynthesis; L-arginine from L-ornithine and carbamoyl phosphate: step 2/3. The polypeptide is Argininosuccinate synthase (Rhodococcus erythropolis (strain PR4 / NBRC 100887)).